The sequence spans 581 residues: 4-hydroxy-3-methylbut-2-en-1-yl diphosphate synthase (flavodoxin) (581 aa).

[4Fe-4S] cluster contacts are provided by Cys489, Cys492, Cys523, and Glu530.

The protein belongs to the IspG family. The cofactor is [4Fe-4S] cluster.

It carries out the reaction (2E)-4-hydroxy-3-methylbut-2-enyl diphosphate + oxidized [flavodoxin] + H2O + 2 H(+) = 2-C-methyl-D-erythritol 2,4-cyclic diphosphate + reduced [flavodoxin]. It participates in isoprenoid biosynthesis; isopentenyl diphosphate biosynthesis via DXP pathway; isopentenyl diphosphate from 1-deoxy-D-xylulose 5-phosphate: step 5/6. Its function is as follows. Converts 2C-methyl-D-erythritol 2,4-cyclodiphosphate (ME-2,4cPP) into 1-hydroxy-2-methyl-2-(E)-butenyl 4-diphosphate. The polypeptide is 4-hydroxy-3-methylbut-2-en-1-yl diphosphate synthase (flavodoxin) (Porphyromonas gingivalis (strain ATCC BAA-308 / W83)).